Reading from the N-terminus, the 602-residue chain is Isocitrate dehydrogenase kinase/phosphatase (602 aa).

ATP-binding positions include 327–333 (APGIKGM) and lysine 348. Aspartate 383 is an active-site residue.

It belongs to the AceK family.

It localises to the cytoplasm. It catalyses the reaction L-seryl-[isocitrate dehydrogenase] + ATP = O-phospho-L-seryl-[isocitrate dehydrogenase] + ADP + H(+). In terms of biological role, bifunctional enzyme which can phosphorylate or dephosphorylate isocitrate dehydrogenase (IDH) on a specific serine residue. This is a regulatory mechanism which enables bacteria to bypass the Krebs cycle via the glyoxylate shunt in response to the source of carbon. When bacteria are grown on glucose, IDH is fully active and unphosphorylated, but when grown on acetate or ethanol, the activity of IDH declines drastically concomitant with its phosphorylation. The chain is Isocitrate dehydrogenase kinase/phosphatase from Paraburkholderia phymatum (strain DSM 17167 / CIP 108236 / LMG 21445 / STM815) (Burkholderia phymatum).